Reading from the N-terminus, the 418-residue chain is tRNA-2-methylthio-N(6)-dimethylallyladenosine synthase (418 aa).

Residues 2-118 (PGYYLWTIGC…WGEIPEGFIL (117 aa)) form the MTTase N-terminal domain. Positions 11, 47, 81, 134, 138, and 141 each coordinate [4Fe-4S] cluster. Residues 120–352 (LKPPVSASIT…DLQKETVSKA (233 aa)) form the Radical SAM core domain. One can recognise a TRAM domain in the interval 354–414 (SALVDTFAEV…PWSLQAKLVK (61 aa)).

The protein belongs to the methylthiotransferase family. MiaB subfamily. Monomer. [4Fe-4S] cluster serves as cofactor.

It is found in the cytoplasm. It carries out the reaction N(6)-dimethylallyladenosine(37) in tRNA + (sulfur carrier)-SH + AH2 + 2 S-adenosyl-L-methionine = 2-methylsulfanyl-N(6)-dimethylallyladenosine(37) in tRNA + (sulfur carrier)-H + 5'-deoxyadenosine + L-methionine + A + S-adenosyl-L-homocysteine + 2 H(+). Functionally, catalyzes the methylthiolation of N6-(dimethylallyl)adenosine (i(6)A), leading to the formation of 2-methylthio-N6-(dimethylallyl)adenosine (ms(2)i(6)A) at position 37 in tRNAs that read codons beginning with uridine. The chain is tRNA-2-methylthio-N(6)-dimethylallyladenosine synthase from Dehalococcoides mccartyi (strain ATCC BAA-2266 / KCTC 15142 / 195) (Dehalococcoides ethenogenes (strain 195)).